The primary structure comprises 399 residues: Tryptophan synthase beta chain (399 aa).

Lys-90 is modified (N6-(pyridoxal phosphate)lysine).

The protein belongs to the TrpB family. In terms of assembly, tetramer of two alpha and two beta chains. Pyridoxal 5'-phosphate is required as a cofactor.

The catalysed reaction is (1S,2R)-1-C-(indol-3-yl)glycerol 3-phosphate + L-serine = D-glyceraldehyde 3-phosphate + L-tryptophan + H2O. It participates in amino-acid biosynthesis; L-tryptophan biosynthesis; L-tryptophan from chorismate: step 5/5. The beta subunit is responsible for the synthesis of L-tryptophan from indole and L-serine. The chain is Tryptophan synthase beta chain from Lactiplantibacillus plantarum (strain ATCC BAA-793 / NCIMB 8826 / WCFS1) (Lactobacillus plantarum).